Here is a 548-residue protein sequence, read N- to C-terminus: Probable manganese-dependent inorganic pyrophosphatase (548 aa).

A PPase part 1 region spans residues 1 to 74 (MKALERVYVI…HIETLEPTVE (74 aa)). The Mn(2+) site is built by histidine 12, aspartate 16, and aspartate 18. 2 CBS domains span residues 77 to 132 (ELKN…RLKI) and 254 to 311 (MSKK…VILV). Positions 306-548 (KKVILVDHNE…KIGEVLRRER (243 aa)) are PPase part 2. Residues aspartate 312, histidine 334, and aspartate 386 each coordinate Mn(2+).

It belongs to the PPase class C family. Mn(2+) is required as a cofactor.

It is found in the cytoplasm. It carries out the reaction diphosphate + H2O = 2 phosphate + H(+). The chain is Probable manganese-dependent inorganic pyrophosphatase (ppaC) from Thermotoga maritima (strain ATCC 43589 / DSM 3109 / JCM 10099 / NBRC 100826 / MSB8).